The following is a 249-amino-acid chain: Small ribosomal subunit protein uS2 (249 aa).

It belongs to the universal ribosomal protein uS2 family.

In Listeria monocytogenes serovar 1/2a (strain ATCC BAA-679 / EGD-e), this protein is Small ribosomal subunit protein uS2.